Here is a 274-residue protein sequence, read N- to C-terminus: Large ribosomal subunit protein uL2 (274 aa).

The segment at 223-274 is disordered; that stretch reads VAMNPVDHPHGGGEGRTSGGRHPVSPWGMPTKGFKTRKNKSTDKYIVRRRNK.

It belongs to the universal ribosomal protein uL2 family. In terms of assembly, part of the 50S ribosomal subunit. Forms a bridge to the 30S subunit in the 70S ribosome.

Functionally, one of the primary rRNA binding proteins. Required for association of the 30S and 50S subunits to form the 70S ribosome, for tRNA binding and peptide bond formation. It has been suggested to have peptidyltransferase activity; this is somewhat controversial. Makes several contacts with the 16S rRNA in the 70S ribosome. The polypeptide is Large ribosomal subunit protein uL2 (Aliivibrio salmonicida (strain LFI1238) (Vibrio salmonicida (strain LFI1238))).